The following is a 92-amino-acid chain: MTKLEEHLEGIVNIFHQYSVRKGHFDTLSKGELKQLLTKELANTIKNIKDKAVIDEIFQGLDANQDEQVDFQEFISLVAIALKAAHYHTHKE.

EF-hand domains follow at residues 13 to 48 (NIFH…IKNI) and 49 to 84 (KDKA…ALKA). Residue H16 coordinates Cu cation. H16 contributes to the Zn(2+) binding site. Residues S19, K22, and H24 each contribute to the Ca(2+) site. D26 contributes to the Cu cation binding site. D26 serves as a coordination point for Zn(2+). Ca(2+) contacts are provided by T27 and E32. Residues 38-53 (TKELANTIKNIKDKAV) are hinge domain. 5 residues coordinate Ca(2+): D62, N64, D66, Q68, and E73. Residues H86 and H90 each coordinate Cu cation. Zn(2+) is bound by residues H86 and H90.

Belongs to the S-100 family. As to quaternary structure, homodimer. Homooligomer (tetramer or hexamer) in the presence of calcium, zinc and copper ions. Interacts with AGER and both calcium and zinc are essential for the interaction. Interacts with CACYBP in a calcium-dependent manner. In terms of tissue distribution, predominantly expressed by neutrophils, monocytes and activated macrophages. Expressed by eosinophils and macrophages in asthmatic airways in regions where mast cells accumulate. Found in high concentrations in the serum of patients suffering from various inflammatory disorders, such as rheumatoid arthritis, psoriatic arthritis, Crohn's disease, ulcerative colitis, and Kawasaki disease.

Its subcellular location is the secreted. It is found in the cytoplasm. The protein localises to the cytoskeleton. It localises to the cell membrane. S100A12 is a calcium-, zinc- and copper-binding protein which plays a prominent role in the regulation of inflammatory processes and immune response. Its pro-inflammatory activity involves recruitment of leukocytes, promotion of cytokine and chemokine production, and regulation of leukocyte adhesion and migration. Acts as an alarmin or a danger associated molecular pattern (DAMP) molecule and stimulates innate immune cells via binding to receptor for advanced glycation endproducts (AGER). Binding to AGER activates the MAP-kinase and NF-kappa-B signaling pathways leading to production of pro-inflammatory cytokines and up-regulation of cell adhesion molecules ICAM1 and VCAM1. Acts as a monocyte and mast cell chemoattractant. Can stimulate mast cell degranulation and activation which generates chemokines, histamine and cytokines inducing further leukocyte recruitment to the sites of inflammation. Can inhibit the activity of matrix metalloproteinases; MMP2, MMP3 and MMP9 by chelating Zn(2+) from their active sites. Possesses filariacidal and filariastatic activity. Calcitermin possesses antifungal activity against C.albicans and is also active against E.coli and P.aeruginosa but not L.monocytogenes and S.aureus. In Homo sapiens (Human), this protein is Protein S100-A12 (S100A12).